Here is a 450-residue protein sequence, read N- to C-terminus: Tubulin beta-3 chain (450 aa).

Residues Gln11, Glu69, Ser138, Gly142, Thr143, Gly144, Asn204, and Asn226 each coordinate GTP. Position 69 (Glu69) interacts with Mg(2+). Residues 420-450 (SEYQQYQDATADEEGDYEDEEEGEYQQEEEY) are disordered. Positions 429 to 450 (TADEEGDYEDEEEGEYQQEEEY) are enriched in acidic residues.

This sequence belongs to the tubulin family. As to quaternary structure, dimer of alpha and beta chains. A typical microtubule is a hollow water-filled tube with an outer diameter of 25 nm and an inner diameter of 15 nM. Alpha-beta heterodimers associate head-to-tail to form protofilaments running lengthwise along the microtubule wall with the beta-tubulin subunit facing the microtubule plus end conferring a structural polarity. Microtubules usually have 13 protofilaments but different protofilament numbers can be found in some organisms and specialized cells. Requires Mg(2+) as cofactor.

It localises to the cytoplasm. Its subcellular location is the cytoskeleton. Its function is as follows. Tubulin is the major constituent of microtubules, a cylinder consisting of laterally associated linear protofilaments composed of alpha- and beta-tubulin heterodimers. Microtubules grow by the addition of GTP-tubulin dimers to the microtubule end, where a stabilizing cap forms. Below the cap, tubulin dimers are in GDP-bound state, owing to GTPase activity of alpha-tubulin. The polypeptide is Tubulin beta-3 chain (TUBB3) (Arabidopsis thaliana (Mouse-ear cress)).